Consider the following 157-residue polypeptide: S-ribosylhomocysteine lyase (157 aa).

Positions 54, 58, and 126 each coordinate Fe cation.

Belongs to the LuxS family. As to quaternary structure, homodimer. It depends on Fe cation as a cofactor.

The enzyme catalyses S-(5-deoxy-D-ribos-5-yl)-L-homocysteine = (S)-4,5-dihydroxypentane-2,3-dione + L-homocysteine. Functionally, involved in the synthesis of autoinducer 2 (AI-2) which is secreted by bacteria and is used to communicate both the cell density and the metabolic potential of the environment. The regulation of gene expression in response to changes in cell density is called quorum sensing. Catalyzes the transformation of S-ribosylhomocysteine (RHC) to homocysteine (HC) and 4,5-dihydroxy-2,3-pentadione (DPD). In Bacillus cereus (strain G9842), this protein is S-ribosylhomocysteine lyase.